Reading from the N-terminus, the 351-residue chain is E3 ubiquitin-protein ligase TRIM63 (351 aa).

The RING-type zinc finger occupies 23-79; the sequence is CPICLEMFTKPVVILPCQHNLCRKCANDIFQAANPYWTNRGGSVSMSGGRFRCPSCR. The tract at residues 74–218 is interaction with TTN; that stretch reads RCPSCRHEVI…LSHKFDALYA (145 aa). The segment at 117–159 adopts a B box-type zinc-finger fold; it reads GSHPMCKEHEDEKINIYCLTCEVPTCSLCKVFGAHQACEVAPL. 4 residues coordinate Zn(2+): cysteine 122, histidine 125, cysteine 145, and histidine 151. The stretch at 189-269 forms a coiled coil; sequence SQLEDSCRVT…VETAIQSLDE (81 aa). A COS domain is found at 267–325; the sequence is LDEPGGATFLLSAKPLIKSIVEASKGCQLGKTEQGFENMDYFTLNLEHIAEALRAIDFG. Over residues 326-345 the composition is skewed to acidic residues; it reads TDEEEEFTEEEEEEDQEEGV. The interval 326 to 351 is disordered; sequence TDEEEEFTEEEEEEDQEEGVSTEGHQ.

Homodimer. Homooligomer and heterooligomer. Interacts with SUMO2, titin/TTN and GMEB1. Interacts with TRIM54 and probably with TRIM55 and TNNI3. Forms a ternary complex with RACK1 and PRKCE. Interacts with CKM. As to expression, muscle specific. Selectively expressed in heart and skeletal muscle.

The protein localises to the cytoplasm. It is found in the nucleus. The protein resides in the myofibril. It localises to the sarcomere. Its subcellular location is the m line. The protein localises to the z line. It catalyses the reaction S-ubiquitinyl-[E2 ubiquitin-conjugating enzyme]-L-cysteine + [acceptor protein]-L-lysine = [E2 ubiquitin-conjugating enzyme]-L-cysteine + N(6)-ubiquitinyl-[acceptor protein]-L-lysine.. It functions in the pathway protein modification; protein ubiquitination. Its function is as follows. E3 ubiquitin ligase. Mediates the ubiquitination and subsequent proteasomal degradation of CKM, GMEB1 and HIBADH. Regulates the proteasomal degradation of muscle proteins under amino acid starvation, where muscle protein is catabolized to provide other organs with amino acids. Inhibits de novo skeletal muscle protein synthesis under amino acid starvation. Regulates proteasomal degradation of cardiac troponin I/TNNI3 and probably of other sarcomeric-associated proteins. May play a role in striated muscle atrophy and hypertrophy by regulating an anti-hypertrophic PKC-mediated signaling pathway. May regulate the organization of myofibrils through TTN in muscle cells. In Rattus norvegicus (Rat), this protein is E3 ubiquitin-protein ligase TRIM63 (Trim63).